The sequence spans 222 residues: GTP-binding nuclear protein Ran-4 (222 aa).

The 165-residue stretch at 10-174 folds into the Small GTPase Ran-type domain; the sequence is DLPTFKLLIV…LYLARRIAGD (165 aa). 21 to 28 serves as a coordination point for GTP; the sequence is DGGTGKTT. The tract at residues 40-48 is switch-I; the sequence is HNTEPTLGV. GTP-binding positions include glycine 71, 125 to 128, and 153 to 155; these read NKVD and SAK. The switch-II stretch occupies residues 71–87; the sequence is GQEKYSGLKDAYYIHGQ.

The protein belongs to the small GTPase superfamily. Ran family. In terms of assembly, found in a nuclear export complex with RanGTP, exportin and pre-miRNA.

Its subcellular location is the nucleus. Its function is as follows. GTP-binding protein involved in nucleocytoplasmic transport. Required for the import of protein into the nucleus and also for RNA export. Involved in chromatin condensation and control of cell cycle. This chain is GTP-binding nuclear protein Ran-4 (RAN4), found in Arabidopsis thaliana (Mouse-ear cress).